A 214-amino-acid polypeptide reads, in one-letter code: Small ribosomal subunit protein uS5 (214 aa).

The tract at residues 1–61 (MTDSSPQSNP…QERDSEWQER (61 aa)) is disordered. A compositionally biased stretch (low complexity) spans 9–29 (NPNAVPGAADVPAAAEGQQQQ). Over residues 30-60 (EQRRGRGDRDGRRGDRRGGRRGQERDSEWQE) the composition is skewed to basic and acidic residues. In terms of domain architecture, S5 DRBM spans 58 to 121 (WQERVVQIRR…ADGKKHLVKV (64 aa)).

This sequence belongs to the universal ribosomal protein uS5 family. Part of the 30S ribosomal subunit. Contacts proteins S4 and S8.

In terms of biological role, with S4 and S12 plays an important role in translational accuracy. Located at the back of the 30S subunit body where it stabilizes the conformation of the head with respect to the body. The polypeptide is Small ribosomal subunit protein uS5 (Synechococcus sp. (strain CC9605)).